The following is a 165-amino-acid chain: Protein SprT (165 aa).

Residues 22–163 form the SprT-like domain; that stretch reads LAQANLKLDR…RCVHCGEPLV (142 aa). A Zn(2+)-binding site is contributed by H78. E79 is an active-site residue. Zn(2+) is bound at residue H82.

This sequence belongs to the SprT family. Zn(2+) serves as cofactor.

It localises to the cytoplasm. The chain is Protein SprT from Salmonella paratyphi A (strain ATCC 9150 / SARB42).